Reading from the N-terminus, the 75-residue chain is UPF0346 protein OB1736 (75 aa).

The protein belongs to the UPF0346 family.

This chain is UPF0346 protein OB1736, found in Oceanobacillus iheyensis (strain DSM 14371 / CIP 107618 / JCM 11309 / KCTC 3954 / HTE831).